Here is a 306-residue protein sequence, read N- to C-terminus: 4-hydroxy-3-methylbut-2-enyl diphosphate reductase (306 aa).

[4Fe-4S] cluster is bound at residue Cys-12. (2E)-4-hydroxy-3-methylbut-2-enyl diphosphate contacts are provided by His-41 and His-74. Dimethylallyl diphosphate contacts are provided by His-41 and His-74. Isopentenyl diphosphate is bound by residues His-41 and His-74. [4Fe-4S] cluster is bound at residue Cys-96. His-124 lines the (2E)-4-hydroxy-3-methylbut-2-enyl diphosphate pocket. His-124 lines the dimethylallyl diphosphate pocket. Residue His-124 participates in isopentenyl diphosphate binding. Glu-126 functions as the Proton donor in the catalytic mechanism. Thr-164 is a binding site for (2E)-4-hydroxy-3-methylbut-2-enyl diphosphate. [4Fe-4S] cluster is bound at residue Cys-194. Residues Ser-222, Ser-223, Asn-224, and Ser-266 each contribute to the (2E)-4-hydroxy-3-methylbut-2-enyl diphosphate site. Dimethylallyl diphosphate contacts are provided by Ser-222, Ser-223, Asn-224, and Ser-266. Positions 222, 223, 224, and 266 each coordinate isopentenyl diphosphate.

It belongs to the IspH family. Requires [4Fe-4S] cluster as cofactor.

It catalyses the reaction isopentenyl diphosphate + 2 oxidized [2Fe-2S]-[ferredoxin] + H2O = (2E)-4-hydroxy-3-methylbut-2-enyl diphosphate + 2 reduced [2Fe-2S]-[ferredoxin] + 2 H(+). The enzyme catalyses dimethylallyl diphosphate + 2 oxidized [2Fe-2S]-[ferredoxin] + H2O = (2E)-4-hydroxy-3-methylbut-2-enyl diphosphate + 2 reduced [2Fe-2S]-[ferredoxin] + 2 H(+). The protein operates within isoprenoid biosynthesis; dimethylallyl diphosphate biosynthesis; dimethylallyl diphosphate from (2E)-4-hydroxy-3-methylbutenyl diphosphate: step 1/1. Its pathway is isoprenoid biosynthesis; isopentenyl diphosphate biosynthesis via DXP pathway; isopentenyl diphosphate from 1-deoxy-D-xylulose 5-phosphate: step 6/6. Catalyzes the conversion of 1-hydroxy-2-methyl-2-(E)-butenyl 4-diphosphate (HMBPP) into a mixture of isopentenyl diphosphate (IPP) and dimethylallyl diphosphate (DMAPP). Acts in the terminal step of the DOXP/MEP pathway for isoprenoid precursor biosynthesis. The chain is 4-hydroxy-3-methylbut-2-enyl diphosphate reductase from Ruthia magnifica subsp. Calyptogena magnifica.